The sequence spans 123 residues: Small ribosomal subunit protein uS12c (123 aa).

It belongs to the universal ribosomal protein uS12 family. As to quaternary structure, part of the 30S ribosomal subunit.

It localises to the plastid. The protein resides in the chloroplast. Its function is as follows. With S4 and S5 plays an important role in translational accuracy. Located at the interface of the 30S and 50S subunits. This is Small ribosomal subunit protein uS12c (rps12) from Chlorokybus atmophyticus (Soil alga).